The primary structure comprises 125 residues: Glycine cleavage system H protein (125 aa).

Residues 22-103 enclose the Lipoyl-binding domain; it reads VFVVGITENA…AFTAWIFKIK (82 aa). At Lys63 the chain carries N6-lipoyllysine.

Belongs to the GcvH family. The glycine cleavage system is composed of four proteins: P, T, L and H. It depends on (R)-lipoate as a cofactor.

In terms of biological role, the glycine cleavage system catalyzes the degradation of glycine. The H protein shuttles the methylamine group of glycine from the P protein to the T protein. The sequence is that of Glycine cleavage system H protein from Bordetella avium (strain 197N).